A 124-amino-acid chain; its full sequence is S-adenosylmethionine decarboxylase proenzyme (124 aa).

Ser71 serves as the catalytic Schiff-base intermediate with substrate; via pyruvic acid. Ser71 is modified (pyruvic acid (Ser); by autocatalysis). His76 serves as the catalytic Proton acceptor; for processing activity. The Proton donor; for catalytic activity role is filled by Cys91.

It belongs to the prokaryotic AdoMetDC family. Type 1 subfamily. As to quaternary structure, heterotetramer of two alpha and two beta chains arranged as a dimer of alpha/beta heterodimers. Pyruvate is required as a cofactor. In terms of processing, is synthesized initially as an inactive proenzyme. Formation of the active enzyme involves a self-maturation process in which the active site pyruvoyl group is generated from an internal serine residue via an autocatalytic post-translational modification. Two non-identical subunits are generated from the proenzyme in this reaction, and the pyruvate is formed at the N-terminus of the alpha chain, which is derived from the carboxyl end of the proenzyme. The post-translation cleavage follows an unusual pathway, termed non-hydrolytic serinolysis, in which the side chain hydroxyl group of the serine supplies its oxygen atom to form the C-terminus of the beta chain, while the remainder of the serine residue undergoes an oxidative deamination to produce ammonia and the pyruvoyl group blocking the N-terminus of the alpha chain.

The enzyme catalyses S-adenosyl-L-methionine + H(+) = S-adenosyl 3-(methylsulfanyl)propylamine + CO2. It participates in amine and polyamine biosynthesis; S-adenosylmethioninamine biosynthesis; S-adenosylmethioninamine from S-adenosyl-L-methionine: step 1/1. With respect to regulation, competitively inhibited by methylglyoxal bis-guanylhydrazone. Irreversibly inhibited by NaBH(4) in vitro. Functionally, catalyzes the decarboxylation of S-adenosylmethionine to S-adenosylmethioninamine (dcAdoMet), the propylamine donor required for the synthesis of the polyamines spermine and spermidine from the diamine putrescine. Has no arginine decarboxylase (ArgDC) activity. This Saccharolobus solfataricus (strain ATCC 35092 / DSM 1617 / JCM 11322 / P2) (Sulfolobus solfataricus) protein is S-adenosylmethionine decarboxylase proenzyme (speH).